Reading from the N-terminus, the 388-residue chain is Lamin tail domain-containing protein 1 (388 aa).

The LTD domain occupies 136–254 (EVGQFTSSSL…QAIAWYTPIH (119 aa)). Residues 349-388 (EPHNTSTAGGRLDRQPRTRSTRPNRASGSKKKKTSESQKQ) are disordered. Positions 365–381 (RTRSTRPNRASGSKKKK) are enriched in basic residues.

This sequence belongs to the intermediate filament family.

The protein is Lamin tail domain-containing protein 1 (LMNTD1) of Homo sapiens (Human).